A 321-amino-acid chain; its full sequence is Methenyltetrahydromethanopterin cyclohydrolase (321 aa).

This sequence belongs to the MCH family.

Its subcellular location is the cytoplasm. The catalysed reaction is 5,10-methenyl-5,6,7,8-tetrahydromethanopterin + H2O = N(5)-formyl-5,6,7,8-tetrahydromethanopterin + H(+). It functions in the pathway one-carbon metabolism; methanogenesis from CO(2); 5,10-methenyl-5,6,7,8-tetrahydromethanopterin from CO(2): step 3/3. Its function is as follows. Catalyzes the reversible interconversion of 5-formyl-H(4)MPT to methenyl-H(4)MPT(+). This chain is Methenyltetrahydromethanopterin cyclohydrolase, found in Methanosarcina mazei (strain ATCC BAA-159 / DSM 3647 / Goe1 / Go1 / JCM 11833 / OCM 88) (Methanosarcina frisia).